We begin with the raw amino-acid sequence, 358 residues long: Probable branched-chain-amino-acid aminotransferase (358 aa).

K196 is subject to N6-(pyridoxal phosphate)lysine.

Belongs to the class-IV pyridoxal-phosphate-dependent aminotransferase family. It depends on pyridoxal 5'-phosphate as a cofactor.

It carries out the reaction L-leucine + 2-oxoglutarate = 4-methyl-2-oxopentanoate + L-glutamate. The enzyme catalyses L-isoleucine + 2-oxoglutarate = (S)-3-methyl-2-oxopentanoate + L-glutamate. The catalysed reaction is L-valine + 2-oxoglutarate = 3-methyl-2-oxobutanoate + L-glutamate. It participates in amino-acid biosynthesis; L-isoleucine biosynthesis; L-isoleucine from 2-oxobutanoate: step 4/4. Its pathway is amino-acid biosynthesis; L-leucine biosynthesis; L-leucine from 3-methyl-2-oxobutanoate: step 4/4. The protein operates within amino-acid biosynthesis; L-valine biosynthesis; L-valine from pyruvate: step 4/4. Acts on leucine, isoleucine and valine. In Staphylococcus aureus (strain MRSA252), this protein is Probable branched-chain-amino-acid aminotransferase (ilvE).